The following is a 375-amino-acid chain: Solute carrier family 35 member F2 (375 aa).

Met-1 is modified (N-acetylmethionine). Phosphoserine is present on residues Ser-5, Ser-22, Ser-25, and Ser-28. Transmembrane regions (helical) follow at residues Ile-39–Thr-59, Met-73–Phe-93, Trp-108–Val-126, Ser-136–Leu-156, Phe-165–Ala-185, Val-195–Cys-215, Glu-227–Val-247, Leu-263–Ile-283, Ser-290–Phe-310, and Phe-314–Ser-334. Phosphoserine is present on Ser-372.

It belongs to the SLC35F solute transporter family.

Its subcellular location is the membrane. In terms of biological role, putative solute transporter. The protein is Solute carrier family 35 member F2 (Slc35f2) of Mus musculus (Mouse).